The chain runs to 238 residues: Thrombin-like enzyme halystase (238 aa).

One can recognise a Peptidase S1 domain in the interval 1–229 (IIGGDECNIN…HLDWIKSIIA (229 aa)). Intrachain disulfides connect Cys-7–Cys-141, Cys-28–Cys-44, Cys-76–Cys-236, Cys-120–Cys-190, Cys-152–Cys-169, and Cys-180–Cys-205. Catalysis depends on His-43, which acts as the Charge relay system. Asn-81 carries N-linked (GlcNAc...) asparagine glycosylation. The active-site Charge relay system is the Asp-88. The N-linked (GlcNAc...) asparagine glycan is linked to Asn-100. The active-site Charge relay system is the Ser-184.

It belongs to the peptidase S1 family. Snake venom subfamily. In terms of assembly, monomer. Expressed by the venom gland.

It is found in the secreted. Inhibited by diisopropylfluorophosphate (DFP), PMSF and leupeptin. Its function is as follows. Thrombin-like snake venom serine protease. Cleaves fibrinogen (beta chain of fibrinogen (FGB) and more slowly alpha chain (FGA)) without inducing fibrin clotting and cleaves kininogen to produce bradykinin (KNG), resulting in the reduction of blood pressure. This chain is Thrombin-like enzyme halystase, found in Gloydius blomhoffii (Mamushi).